A 317-amino-acid chain; its full sequence is tRNA pseudouridine synthase B (317 aa).

The active-site Nucleophile is aspartate 47.

The protein belongs to the pseudouridine synthase TruB family. Type 1 subfamily.

The catalysed reaction is uridine(55) in tRNA = pseudouridine(55) in tRNA. Its function is as follows. Responsible for synthesis of pseudouridine from uracil-55 in the psi GC loop of transfer RNAs. This is tRNA pseudouridine synthase B from Shewanella denitrificans (strain OS217 / ATCC BAA-1090 / DSM 15013).